A 295-amino-acid polypeptide reads, in one-letter code: Excinuclease cho (295 aa).

The region spanning 33 to 108 (TRPGVYLFHG…IKEQQPLFNK (76 aa)) is the GIY-YIG domain.

Functionally, incises the DNA at the 3' side of a lesion during nucleotide excision repair. Incises the DNA farther away from the lesion than UvrC. Not able to incise the 5' site of a lesion. When a lesion remains because UvrC is not able to induce the 3' incision, Cho incises the DNA. Then UvrC makes the 5' incision. The combined action of Cho and UvrC broadens the substrate range of nucleotide excision repair. This chain is Excinuclease cho (cho), found in Shigella flexneri.